A 437-amino-acid chain; its full sequence is UDP-sugar transporter protein SLC35A5 (437 aa).

At 1 to 21 (MKVIFLRQLKTRGMERKCSRR) the chain is on the cytoplasmic side. Residues 22–42 (PGLGPPTLYTFLLGIIFITLS) form a helical membrane-spanning segment. The Lumenal portion of the chain corresponds to 43–65 (SSRILLVKYSANEENKYDYLPTT). The helical transmembrane segment at 66-86 (VNVCSELMKLILCILVSLCVI) threads the bilayer. The Cytoplasmic segment spans residues 87–106 (KKEDHQSRHLRCTSWKEFSS). A helical transmembrane segment spans residues 107-129 (FMKWSIPAFLYFLDNLIVFYVLS). Topologically, residues 130-132 (YLQ) are lumenal. Residues 133–155 (PAMAVIFSNFSIITTALLFRIVL) form a helical membrane-spanning segment. Residues 156 to 158 (KRH) lie on the Cytoplasmic side of the membrane. Residues 159-179 (LNWIQWASLLILFLSIVALTA) traverse the membrane as a helical segment. Residues 180-241 (STKTSQHELA…TTARVFSHIR (62 aa)) are Lumenal-facing. N-linked (GlcNAc...) asparagine glycosylation occurs at N217. The helical transmembrane segment at 242–262 (LGLGHVLIIVQCFISSMANIY) threads the bilayer. Residues 263–276 (NEKILKEGTQLTES) are Cytoplasmic-facing. Residues 277-297 (IFIQNSKLYFFGIVFNGLTLV) form a helical membrane-spanning segment. At 298–316 (LQSSNRDQIQNCGFFYGHN) the chain is on the lumenal side. The chain crosses the membrane as a helical span at residues 317–337 (AFSVVLIFVTAFQGLSVAFIL). Residues 338 to 343 (KFLDNM) are Cytoplasmic-facing. A helical membrane pass occupies residues 344–364 (FHVLMAQVTTVIITTVSVLVF). Over 365–367 (DFR) the chain is Lumenal. Residues 368–388 (PSLDFFLEAPSVLLSIFIYNA) form a helical membrane-spanning segment. Residues 389–437 (SKPQNLECAPKQERIRHLSGSLWERSSGDGEELERLTKLKSDDSDDDTL) lie on the Cytoplasmic side of the membrane. S407, S429, and S432 each carry phosphoserine. The disordered stretch occupies residues 412-437 (ERSSGDGEELERLTKLKSDDSDDDTL). The segment covering 421–430 (LERLTKLKSD) has biased composition (basic and acidic residues).

Belongs to the nucleotide-sugar transporter family. SLC35A subfamily. Probably forms homooligomers and heterooligomers with SLC35A1, SLC35A2, SLC35A3 and SLC35A4.

The protein resides in the golgi apparatus membrane. The catalysed reaction is UMP(out) + UDP-alpha-D-glucuronate(in) = UMP(in) + UDP-alpha-D-glucuronate(out). It carries out the reaction UMP(out) + UDP-N-acetyl-alpha-D-glucosamine(in) = UMP(in) + UDP-N-acetyl-alpha-D-glucosamine(out). The enzyme catalyses UDP-N-acetyl-alpha-D-galactosamine(in) + UMP(out) = UDP-N-acetyl-alpha-D-galactosamine(out) + UMP(in). Its function is as follows. Probable UDP-sugar:UMP transmembrane antiporter involved in UDP-alpha-D-glucuronate/UDP-GlcA, UDP-GlcNAc/UDP-N-acetyl-alpha-D-glucosamine and UDP-N-acetyl-alpha-D-galactosamine/UDP-GalNAc transport from the cytosol to the lumen of the Golgi. The chain is UDP-sugar transporter protein SLC35A5 from Mus musculus (Mouse).